The primary structure comprises 281 residues: Undecaprenyl-diphosphatase 1 (281 aa).

The next 6 membrane-spanning stretches (helical) occupy residues 95-115, 119-139, 152-172, 195-215, 227-247, and 256-276; these read WMVIAGTIPVGLAGVLLKDLI, FRNLWITATVLILFSLVFILA, LTMKDAVLMGLWQCLALIPGV, FSFLLAIPAVLASGLFSLPDA, LQLLVGSGIGFVVGYISIAWL, and FAWFAAYRIPLGLLVMALLGT.

This sequence belongs to the UppP family.

Its subcellular location is the cell membrane. It catalyses the reaction di-trans,octa-cis-undecaprenyl diphosphate + H2O = di-trans,octa-cis-undecaprenyl phosphate + phosphate + H(+). In terms of biological role, catalyzes the dephosphorylation of undecaprenyl diphosphate (UPP). Confers resistance to bacitracin. This is Undecaprenyl-diphosphatase 1 from Corynebacterium jeikeium (strain K411).